We begin with the raw amino-acid sequence, 1077 residues long: Bifunctional helicase and thymine dioxygenase JBP2 (1077 aa).

Residues 1-516 form a thymine dioxygenase region; it reads MPMFMDGASQ…PPLCIPFKIA (516 aa). Positions 391, 393, and 441 each coordinate Fe cation. Residue arginine 455 coordinates 2-oxoglutarate. Positions 517 to 1075 are DNA Helicase; the sequence is KTLSLTQHAA…RNIDTVKSER (559 aa). The Helicase ATP-binding domain occupies 531–706; the sequence is SRRIKEGDGC…YRLVGWVDDK (176 aa). 544–551 is an ATP binding site; sequence LTMGLGKT. A DEAH box motif is present at residues 657–660; sequence DEGH. The Helicase C-terminal domain occupies 871 to 1032; it reads KLTALISILH…QVVPGHDLVD (162 aa).

In the C-terminal section; belongs to the SNF2/RAD54 helicase family. This sequence in the N-terminal section; belongs to the TET family. JBP2 subfamily. The cofactor is Fe(2+).

It is found in the nucleus. The enzyme catalyses ATP + H2O = ADP + phosphate + H(+). It catalyses the reaction thymine + 2-oxoglutarate + O2 = 5-hydroxymethyluracil + succinate + CO2. Functionally, dioxygenase that catalyzes the first step of DNA base J (beta-d-glucosyl-HOMedU) biosynthesis by converting thymine to 5-hydroxymethyluracil (HOMedU). DNA base J is a hypermodified thymidine residue found in the genome of kinetoplastid parasites, which is localized primarily to repetitive DNA, namely the telomeres, and is implicated in the regulation of antigenic variation. Probably also acts as a DNA helicase. Recognizes and binds specific regions of the genome, hydrolyzes ATP and allows the DNA base J de novo synthesis. Involved in initial synthesis of DNA base J, JBP1 being able to act via the basal level of DNA base J and propagate further synthesis. In contrast to JBP1, it does not specifically bind DNA base J, however it binds chromatin. This Trypanosoma brucei brucei (strain 927/4 GUTat10.1) protein is Bifunctional helicase and thymine dioxygenase JBP2 (JBP2).